A 409-amino-acid chain; its full sequence is Coagulation factor IX (409 aa).

The Ca(2+) site is built by tyrosine 1, asparagine 2, glutamate 7, glutamate 8, glutamate 16, glutamate 18, glutamate 21, glutamate 22, glutamate 27, glutamate 28, and glutamate 31. A Gla domain is found at 1–47 (YNSGKLEESFVRGNLERECIEEKCSFEEAREVFENTEKTNEFWKQYV). 4-carboxyglutamate is present on residues glutamate 7, glutamate 8, glutamate 16, glutamate 18, glutamate 21, glutamate 22, glutamate 27, glutamate 28, glutamate 31, glutamate 34, glutamate 37, and glutamate 41. Glutamate 16 contacts Mg(2+). Cysteine 19 and cysteine 24 are oxidised to a cystine. Glutamate 21 serves as a coordination point for Mg(2+). Mg(2+) is bound at residue glutamate 27. A Mg(2+)-binding site is contributed by glutamate 31. Positions 37, 41, 48, 49, and 51 each coordinate Ca(2+). Positions 37 and 41 each coordinate Mg(2+). The 37-residue stretch at 48-84 (DGDQCEPNPCLNGGLCKDDINSYECWCQVGFEGKNCE) folds into the EGF-like 1; calcium-binding domain. Cystine bridges form between cysteine 52-cysteine 63, cysteine 57-cysteine 72, cysteine 74-cysteine 83, cysteine 89-cysteine 100, cysteine 96-cysteine 110, cysteine 112-cysteine 125, cysteine 133-cysteine 291, cysteine 208-cysteine 224, cysteine 338-cysteine 352, and cysteine 363-cysteine 391. Ca(2+)-binding residues include aspartate 65 and aspartate 66. Aspartate 65 carries the post-translational modification (3R)-3-hydroxyaspartate. Residue serine 69 is modified to Phosphoserine. The EGF-like 2 domain occupies 85–126 (LDATCNIKNGRCKQFCKTGADSKVLCSCTTGYRLAPDQKSCK). The propeptide at 148–182 (AEIIFSNMDYENSTEVEPILDSLTESNQSSDDFIR) is activation peptide. Residue tyrosine 157 is modified to Sulfotyrosine. Position 160 is a phosphoserine (serine 160). The residue at position 161 (threonine 161) is a Phosphothreonine; alternate. The O-linked (GalNAc...) threonine; alternate glycan is linked to threonine 161. O-linked (GalNAc...) threonine glycosylation is present at threonine 171. N-linked (GlcNAc...) asparagine glycosylation occurs at asparagine 174. The Peptidase S1 domain maps to 183–409 (IVGGENAKPG…YTKVSRYVNW (227 aa)). Histidine 223 (charge relay system) is an active-site residue. Ca(2+) contacts are provided by glutamate 237, asparagine 239, glutamate 242, glutamate 244, and glutamate 247. The N-linked (GlcNAc...) asparagine glycan is linked to asparagine 262. Aspartate 271 acts as the Charge relay system in catalysis. Serine 367 (charge relay system) is an active-site residue.

It belongs to the peptidase S1 family. Heterodimer of a light chain and a heavy chain; disulfide-linked. Interacts (inactive and activated) with F11 (activated) in calcium-dependent manner. Interacts with SERPINC1. Post-translationally, activated by factor XIa, which excises the activation peptide. The propeptide can also be removed by snake venom protease. Activated by coagulation factor VIIa-tissue factor (F7-F3) complex in calcium-dependent manner. In terms of processing, the iron and 2-oxoglutarate dependent 3-hydroxylation of aspartate and asparagine is (R) stereospecific within EGF domains.

The protein localises to the secreted. It catalyses the reaction Selective cleavage of Arg-|-Ile bond in factor X to form factor Xa.. Its function is as follows. Factor IX is a vitamin K-dependent plasma protein that participates in the intrinsic pathway of blood coagulation by converting factor X to its active form in the presence of Ca(2+) ions, phospholipids, and factor VIIIa. In Sus scrofa (Pig), this protein is Coagulation factor IX (F9).